A 675-amino-acid polypeptide reads, in one-letter code: DNA ligase (675 aa).

NAD(+) is bound by residues 34–38 (DAEYD), 83–84 (SL), and Glu-116. Lys-118 functions as the N6-AMP-lysine intermediate in the catalytic mechanism. Arg-139, Glu-176, Lys-293, and Lys-317 together coordinate NAD(+). Zn(2+) is bound by residues Cys-411, Cys-414, Cys-429, and Cys-435. Positions 594 to 675 (AGENPFKGKT…FLAIVNAYKR (82 aa)) constitute a BRCT domain.

This sequence belongs to the NAD-dependent DNA ligase family. LigA subfamily. Mg(2+) is required as a cofactor. It depends on Mn(2+) as a cofactor.

It catalyses the reaction NAD(+) + (deoxyribonucleotide)n-3'-hydroxyl + 5'-phospho-(deoxyribonucleotide)m = (deoxyribonucleotide)n+m + AMP + beta-nicotinamide D-nucleotide.. In terms of biological role, DNA ligase that catalyzes the formation of phosphodiester linkages between 5'-phosphoryl and 3'-hydroxyl groups in double-stranded DNA using NAD as a coenzyme and as the energy source for the reaction. It is essential for DNA replication and repair of damaged DNA. In Mannheimia succiniciproducens (strain KCTC 0769BP / MBEL55E), this protein is DNA ligase.